We begin with the raw amino-acid sequence, 97 residues long: Co-chaperonin GroES (97 aa).

The protein belongs to the GroES chaperonin family. As to quaternary structure, heptamer of 7 subunits arranged in a ring. Interacts with the chaperonin GroEL.

The protein localises to the cytoplasm. In terms of biological role, together with the chaperonin GroEL, plays an essential role in assisting protein folding. The GroEL-GroES system forms a nano-cage that allows encapsulation of the non-native substrate proteins and provides a physical environment optimized to promote and accelerate protein folding. GroES binds to the apical surface of the GroEL ring, thereby capping the opening of the GroEL channel. The chain is Co-chaperonin GroES from Aeromonas salmonicida (strain A449).